Consider the following 887-residue polypeptide: MTDQADTSERKPKAAGKTLSLKRTVESGHVRQNFSHGRSKSVVVEKKKKRTLKTSADAAPAAAPAAAPAAAEEVAKKPVAAPEVKPAAPVEERPAPVAKAAPEVKAVPAPAPAAAPAVEKKPSRSRSGVVLRTLTEEEKNARAQALDSAREREGEDRRRAEEEARRFAEEDARREAERAAAAARAAEEASRHTADQSTRTRAAEEAKRRLDDDRPAATPAAARPAKEQAIEEDDDKPKRGAGHTPAKAPPARRSEERRRGKLTITKAFDDESERQRSLASMRRRVERERKKHMGIQEAPQKIIREVVIPEVITIQELANRMAERAVDVMKILMKQGIMLKITDVIDSDTAQLVAEELGHTVKRVAESDVEEGLVGEADIEEAKQARAPVVTVMGHVDHGKTSLLDALRKTDVAAGEAGGITQHIGAYQVNLSSGERITFLDTPGHAAFTSMRARGAKVTDIVVLVVAADDGVMPQTIEAINHAKAAGVPMIVAINKMDKPEADPTRVKNELLQHEVVVEDFGGDVLTVPISAKTGMGLDKLEETILLQAELLDIRANPDRAAEGIIVEAKLDRGRGPVGTVLVQRGTLKVGDIIVAGAEWGRVRALINDRGENVESAGPSVPVEVLGLGGAPEAGDVISVVESEGRAREVTAYRQRLQRDKRVGTGGRTSLDQMLSQLKEQDKKELPIVVKADVQGSAEAIVQALEKLGTDEVTARVLHVGVGGVTESDVTLATASRAPIIGFNVRANTQARDAARQAGVEIRYYSVIYDLVDDIKAAMSGMLSPELRETFLGNAEILEIFNISKTGKVAGCRVTEGVVRRGSHVRLIRDDVVIHEGKLSTLKRFKDEVKEVQSGQECGMAFEGYQDMRKGDVIECFDVEVVQRSLA.

Residues 1 to 291 (MTDQADTSER…RRRVERERKK (291 aa)) form a disordered region. Low complexity predominate over residues 58–117 (AAPAAAPAAAPAAAEEVAKKPVAAPEVKPAAPVEERPAPVAKAAPEVKAVPAPAPAAAPA). Basic and acidic residues-rich tracts occupy residues 148–178 (SARE…EAER), 185–194 (AAEEASRHTA), 201–215 (RAAE…DDRP), and 267–276 (AFDDESERQR). A tr-type G domain is found at 385 to 553 (ARAPVVTVMG…TILLQAELLD (169 aa)). The G1 stretch occupies residues 394–401 (GHVDHGKT). Residue 394 to 401 (GHVDHGKT) participates in GTP binding. The interval 419 to 423 (GITQH) is G2. Residues 441 to 444 (DTPG) form a G3 region. Residues 441-445 (DTPGH) and 495-498 (NKMD) contribute to the GTP site. Positions 495–498 (NKMD) are G4. Residues 531–533 (SAK) form a G5 region.

The protein belongs to the TRAFAC class translation factor GTPase superfamily. Classic translation factor GTPase family. IF-2 subfamily.

Its subcellular location is the cytoplasm. Its function is as follows. One of the essential components for the initiation of protein synthesis. Protects formylmethionyl-tRNA from spontaneous hydrolysis and promotes its binding to the 30S ribosomal subunits. Also involved in the hydrolysis of GTP during the formation of the 70S ribosomal complex. The polypeptide is Translation initiation factor IF-2 (Parvibaculum lavamentivorans (strain DS-1 / DSM 13023 / NCIMB 13966)).